The following is a 475-amino-acid chain: MSPQTETKASVGFKAGVKDYKLTYHTPDYETKDTDILAAFRVTPQPGVPAEEAGAAVAAESSTGTWTTVWTDGLTSLDRYKGRCYHIEPVAGEESQFIAYVAYPLDLFEEGSVTNMFTSIVGNVFGFKALRALRLEDLRIPTAYTKTFQGPPHGIQVERDKLNKYGRPLLGCTIKPKLGLSAKNYGRAVYECLRGGLDFTKDDENVNSQPFMRWRDRFLFCAEAIYKAQAETGEIKGHYLNATAGTCEEMMKRAVFARELGVPIVMHDYLTGGFTANTSLAHYCRDNGLLLHIHRAMHAVIDRQKNHGMHFRVLAKALRMSGGDHIHAGTVVGKLEGEREITLGFVDLLRDDYIEKDRSRGIYFTQDWVSLPGVLPVASGGIHVWHMPALTEIFGDDSVLQFGGGTLGHPWGNAPGAVANRVALEACVQARNEGRDLAREGNEIIRAAAKWSPELAAACEVWKEIKFEFPAMDTL.

Residues 1 to 2 (MS) constitute a propeptide that is removed on maturation. Proline 3 carries the N-acetylproline modification. Residue lysine 14 is modified to N6,N6,N6-trimethyllysine. 2 residues coordinate substrate: asparagine 123 and threonine 173. Lysine 175 acts as the Proton acceptor in catalysis. Lysine 177 contributes to the substrate binding site. Mg(2+) is bound by residues lysine 201, aspartate 203, and glutamate 204. The residue at position 201 (lysine 201) is an N6-carboxylysine. Residue histidine 294 is the Proton acceptor of the active site. Arginine 295, histidine 327, and serine 379 together coordinate substrate.

It belongs to the RuBisCO large chain family. Type I subfamily. Heterohexadecamer of 8 large chains and 8 small chains; disulfide-linked. The disulfide link is formed within the large subunit homodimers. It depends on Mg(2+) as a cofactor. In terms of processing, the disulfide bond which can form in the large chain dimeric partners within the hexadecamer appears to be associated with oxidative stress and protein turnover.

It localises to the plastid. It is found in the chloroplast. It carries out the reaction 2 (2R)-3-phosphoglycerate + 2 H(+) = D-ribulose 1,5-bisphosphate + CO2 + H2O. The catalysed reaction is D-ribulose 1,5-bisphosphate + O2 = 2-phosphoglycolate + (2R)-3-phosphoglycerate + 2 H(+). Its function is as follows. RuBisCO catalyzes two reactions: the carboxylation of D-ribulose 1,5-bisphosphate, the primary event in carbon dioxide fixation, as well as the oxidative fragmentation of the pentose substrate in the photorespiration process. Both reactions occur simultaneously and in competition at the same active site. The protein is Ribulose bisphosphate carboxylase large chain of Carpinus caroliniana (American hornbeam).